Here is a 453-residue protein sequence, read N- to C-terminus: Allantoinase (453 aa).

Positions 59, 61, 146, 186, 242, and 315 each coordinate Zn(2+). Lys-146 is subject to N6-carboxylysine.

Belongs to the metallo-dependent hydrolases superfamily. Allantoinase family. In terms of assembly, homotetramer. It depends on Zn(2+) as a cofactor. Post-translationally, carboxylation allows a single lysine to coordinate two zinc ions.

The enzyme catalyses (S)-allantoin + H2O = allantoate + H(+). Its pathway is nitrogen metabolism; (S)-allantoin degradation; allantoate from (S)-allantoin: step 1/1. Its function is as follows. Catalyzes the conversion of allantoin (5-ureidohydantoin) to allantoic acid by hydrolytic cleavage of the five-member hydantoin ring. The sequence is that of Allantoinase from Escherichia coli O139:H28 (strain E24377A / ETEC).